The primary structure comprises 395 residues: Prostaglandin D2 receptor 2 (395 aa).

Residues 1–33 lie on the Extracellular side of the membrane; it reads MSANATLKPLCPILEQMSRLQSHSNTSIRYIDH. N-linked (GlcNAc...) asparagine glycosylation is found at asparagine 4 and asparagine 25. A helical transmembrane segment spans residues 34–56; sequence AAVLLHGLASLLGLVENGVILFV. Residues 57–67 lie on the Cytoplasmic side of the membrane; that stretch reads VGCRMRQTVVT. Residues 68–89 form a helical membrane-spanning segment; the sequence is TWVLHLALSDLLASASLPFFTY. At 90-106 the chain is on the extracellular side; sequence FLAVGHSWELGTTFCKL. A disulfide bridge connects residues cysteine 104 and cysteine 182. The helical transmembrane segment at 107–127 threads the bilayer; the sequence is HSSIFFLNMFASGFLLSAISL. Over 128 to 146 the chain is Cytoplasmic; sequence DRCLQVVRPVWAQNHRTVA. The helical transmembrane segment at 147-168 threads the bilayer; it reads AAHKVCLVLWALAVLNTVPYFV. The Extracellular segment spans residues 169 to 210; that stretch reads FRDTISRLDGRIMCYYNVLLLNPGPDRDATCNSRQVALAVSK. The helical transmembrane segment at 211 to 231 threads the bilayer; the sequence is FLLAFLVPLAIIASSHAAVSL. Topologically, residues 232–247 are cytoplasmic; the sequence is RLQHRGRRRPGRFVRL. A helical membrane pass occupies residues 248–269; sequence VAAVVAAFALCWGPYHVFSLLE. Topologically, residues 270-288 are extracellular; that stretch reads ARAHANPGLRPLVWRGLPF. A helical membrane pass occupies residues 289–308; the sequence is VTSLAFFNSVANPVLYVLTC. The Cytoplasmic portion of the chain corresponds to 309-395; it reads PDMLRKLRRS…LNRALSSTSS (87 aa). Residues 330-333 carry the Involved in the recycling of CRTH2 motif; sequence DSEL. A phosphoserine mark is found at serine 331 and serine 345. The interval 333–363 is disordered; that stretch reads LGGAGSSRRRRTSSTARSASPLALCSRPEEP.

It belongs to the G-protein coupled receptor 1 family. In terms of processing, phosphorylated. Widespread expression. High expression in stomach, small intestine, heart and thymus. Intermediate expression in colon, spinal cord and peripheral blood and low expression in brain, skeletal muscle and spleen. Expressed also on Th2- and Tc2- type cells, eosinophils and basophils.

The protein resides in the cell membrane. Its function is as follows. Receptor for prostaglandin D2 (PGD2). Coupled to the G(i)-protein. Receptor activation may result in pertussis toxin-sensitive decreases in cAMP levels and Ca(2+) mobilization. PI3K signaling is also implicated in mediating PTGDR2 effects. PGD2 induced receptor internalization. CRTH2 internalization can be regulated by diverse kinases such as, PKC, PKA, GRK2, GPRK5/GRK5 and GRK6. Receptor activation is responsible, at least in part, in immune regulation and allergic/inflammation responses. The protein is Prostaglandin D2 receptor 2 (PTGDR2) of Homo sapiens (Human).